The chain runs to 550 residues: Spermatogenesis-associated protein 2 (550 aa).

A PUB domain is found at 83-156 (TVGTAFATLE…YNVRDHPGGA (74 aa)). The PIM motif motif lies at 320–337 (YHLSSLDEVDLYTERGLG). Residues 457–480 (SKPVGSGPSPVGSLVSSGSSSSGG) are disordered.

Belongs to the SPATA2 family.

It localises to the cytoplasm. Its subcellular location is the nucleus. In terms of biological role, bridging factor that mediates the recruitment of cyld to the LUBAC complex, thereby regulating TNF-alpha-induced necroptosis. Required to activate the 'Met-1'- (linear) and 'Lys-63'-linked deubiquitinase activities of cyld. The sequence is that of Spermatogenesis-associated protein 2 from Danio rerio (Zebrafish).